We begin with the raw amino-acid sequence, 455 residues long: Gamma-aminobutyric acid receptor subunit alpha-1 (455 aa).

The N-terminal stretch at 1–27 (MKKSRGLSDYLWAWTLILSTLSGRSYG) is a signal peptide. Residues 28 to 252 (QPSQDELKDN…FHLKRKIGYF (225 aa)) are Extracellular-facing. A glycan (N-linked (GlcNAc...) asparagine) is linked at asparagine 37. A 4-aminobutanoate-binding site is contributed by arginine 93. A glycan (N-linked (GlcNAc...) asparagine) is linked at asparagine 137. Threonine 156 lines the 4-aminobutanoate pocket. Cysteines 165 and 179 form a disulfide. A helical membrane pass occupies residues 253–273 (VIQTYLPCIMTVILSQVSFWL). Topologically, residues 274 to 278 (NRESV) are cytoplasmic. A helical transmembrane segment spans residues 279-300 (PARTVFGVTTVLTMTTLSISAR). The Extracellular segment spans residues 301–310 (NSLPKVAYAT). Residues 311-332 (AMDWFIAVCYAFVFSALIEFAT) traverse the membrane as a helical segment. Residues 333 to 420 (VNYFTKRGYA…TFNSVSKIDR (88 aa)) are Cytoplasmic-facing. A helical membrane pass occupies residues 421–440 (LSRIAFPLLFGIFNLVYWAT). Residues 441–455 (YLNREPQLKAPTPHQ) lie on the Extracellular side of the membrane.

This sequence belongs to the ligand-gated ion channel (TC 1.A.9) family. Gamma-aminobutyric acid receptor (TC 1.A.9.5) subfamily. GABRA1 sub-subfamily. In terms of assembly, heteropentamer, formed by a combination of alpha (GABRA1-6), beta (GABRB1-3), gamma (GABRG1-3), delta (GABRD), epsilon (GABRE), rho (GABRR1-3), pi (GABRP) and theta (GABRQ) subunits, each subunit exhibiting distinct physiological and pharmacological properties. Interacts with UBQLN1. Interacts with TRAK1. Interacts with KIF21B. Identified in a complex of 720 kDa composed of LHFPL4, NLGN2, GABRA1, GABRB2, GABRG2 and GABRB3. Interacts with LHFPL4. Interacts with NLGN2. Interacts with SHISA7; interaction leads to the regulation of GABA(A) receptor trafficking, channel deactivation kinetics and pharmacology. Glycosylated. As to expression, expressed in the cerebellum.

It localises to the postsynaptic cell membrane. The protein localises to the cell membrane. It is found in the cytoplasmic vesicle membrane. It carries out the reaction chloride(in) = chloride(out). Its activity is regulated as follows. Allosterically activated by benzodiazepines, the neuroanesthetic alphaxalone and pentobarbital. Inhibited by the antagonist bicuculline. Potentiated by histamine. Alpha subunit of the heteropentameric ligand-gated chloride channel gated by Gamma-aminobutyric acid (GABA), a major inhibitory neurotransmitter in the brain. GABA-gated chloride channels, also named GABA(A) receptors (GABAAR), consist of five subunits arranged around a central pore and contain GABA active binding site(s) located at the alpha and beta subunit interface(s). When activated by GABA, GABAARs selectively allow the flow of chloride anions across the cell membrane down their electrochemical gradient. Alpha-1/GABRA1-containing GABAARs are largely synaptic. Chloride influx into the postsynaptic neuron following GABAAR opening decreases the neuron ability to generate a new action potential, thereby reducing nerve transmission. GABAARs containing alpha-1 and beta-2 or -3 subunits exhibit synaptogenic activity; the gamma-2 subunit being necessary but not sufficient to induce rapid synaptic contacts formation. GABAARs function also as histamine receptor where histamine binds at the interface of two neighboring beta subunits and potentiates GABA response. GABAARs containing alpha, beta and epsilon subunits also permit spontaneous chloride channel activity while preserving the structural information required for GABA-gated openings. Alpha-1-mediated plasticity in the orbitofrontal cortex regulates context-dependent action selection. Together with rho subunits, may also control neuronal and glial GABAergic transmission in the cerebellum. This is Gamma-aminobutyric acid receptor subunit alpha-1 from Mus musculus (Mouse).